The chain runs to 118 residues: Large ribosomal subunit protein bL20 (118 aa).

It belongs to the bacterial ribosomal protein bL20 family.

Binds directly to 23S ribosomal RNA and is necessary for the in vitro assembly process of the 50S ribosomal subunit. It is not involved in the protein synthesizing functions of that subunit. The chain is Large ribosomal subunit protein bL20 from Thermosipho africanus (strain TCF52B).